The following is a 273-amino-acid chain: Large ribosomal subunit protein uL2 (273 aa).

The interval 223–273 (VVMNPVDHPMGGGEGRSSGGRHPCTPWGVPTKGHKTRSNKSTDKYIVKRRG) is disordered. Over residues 262–273 (KSTDKYIVKRRG) the composition is skewed to basic and acidic residues.

This sequence belongs to the universal ribosomal protein uL2 family. As to quaternary structure, part of the 50S ribosomal subunit. Forms a bridge to the 30S subunit in the 70S ribosome.

One of the primary rRNA binding proteins. Required for association of the 30S and 50S subunits to form the 70S ribosome, for tRNA binding and peptide bond formation. It has been suggested to have peptidyltransferase activity; this is somewhat controversial. Makes several contacts with the 16S rRNA in the 70S ribosome. The chain is Large ribosomal subunit protein uL2 from Syntrophus aciditrophicus (strain SB).